The chain runs to 349 residues: Bifunctional protein FolKE (349 aa).

Positions 1-226 are 2-amino-4-hydroxy-6-hydroxymethyldihydropteridine pyrophosphokinase; it reads MQTTYLSMGS…LFEIDSSKND (226 aa). The interval 226–349 is GTP cyclohydrolase 1; sequence DSIVLIKDIP…KRMEFLESLL (124 aa).

This sequence in the N-terminal section; belongs to the HPPK family. The protein in the C-terminal section; belongs to the GTP cyclohydrolase I family. In terms of assembly, homomer.

The catalysed reaction is 6-hydroxymethyl-7,8-dihydropterin + ATP = (7,8-dihydropterin-6-yl)methyl diphosphate + AMP + H(+). It catalyses the reaction GTP + H2O = 7,8-dihydroneopterin 3'-triphosphate + formate + H(+). It functions in the pathway cofactor biosynthesis; 7,8-dihydroneopterin triphosphate biosynthesis; 7,8-dihydroneopterin triphosphate from GTP: step 1/1. It participates in cofactor biosynthesis; tetrahydrofolate biosynthesis; 2-amino-4-hydroxy-6-hydroxymethyl-7,8-dihydropteridine diphosphate from 7,8-dihydroneopterin triphosphate: step 4/4. The protein is Bifunctional protein FolKE (folKE) of Lactococcus lactis subsp. cremoris (strain MG1363).